The sequence spans 71 residues: Large ribosomal subunit protein bL31 (71 aa).

The protein belongs to the bacterial ribosomal protein bL31 family. Type A subfamily. As to quaternary structure, part of the 50S ribosomal subunit.

Functionally, binds the 23S rRNA. In Mycoplasmopsis synoviae (strain 53) (Mycoplasma synoviae), this protein is Large ribosomal subunit protein bL31 (rpmE).